The sequence spans 422 residues: 26S proteasome non-ATPase regulatory subunit 11 (422 aa).

A PCI domain is found at 224-392; sequence DWKTAYSYFY…GVLIIFDEPP (169 aa).

This sequence belongs to the proteasome subunit S9 family. In terms of assembly, component of the 19S proteasome regulatory particle complex. The 26S proteasome consists of a 20S core particle (CP) and two 19S regulatory subunits (RP). The regulatory particle is made of a lid composed of 9 subunits including PSMD11, a base containing 6 ATPases and few additional components.

It is found in the nucleus. Its subcellular location is the cytoplasm. The protein resides in the cytosol. In terms of biological role, component of the 26S proteasome, a multiprotein complex involved in the ATP-dependent degradation of ubiquitinated proteins. This complex plays a key role in the maintenance of protein homeostasis by removing misfolded or damaged proteins, which could impair cellular functions, and by removing proteins whose functions are no longer required. Therefore, the proteasome participates in numerous cellular processes, including cell cycle progression, apoptosis, or DNA damage repair. In the complex, PSMD11 is required for proteasome assembly. Plays a key role in increased proteasome activity in embryonic stem cells (ESCs): its high expression in ESCs promotes enhanced assembly of the 26S proteasome, followed by higher proteasome activity. In Xenopus tropicalis (Western clawed frog), this protein is 26S proteasome non-ATPase regulatory subunit 11 (psmd11).